Here is a 620-residue protein sequence, read N- to C-terminus: Long-chain fatty acid transport protein 2 (620 aa).

At 1 to 4 (MLSA) the chain is on the lumenal side. A helical transmembrane segment spans residues 5–27 (IYTVLAGLLFLPLLVNLCCPYFF). The Cytoplasmic segment spans residues 28-106 (QDIGYFLKVA…DHLGLRQGDC (79 aa)). A helical membrane pass occupies residues 107-127 (VALLMGNEPAYVWLWLGLVKL). The Lumenal portion of the chain corresponds to 128–261 (GCAMACLNYN…SGLKADDVIY (134 aa)). An AMP-binding site is contributed by 222–233 (YIYTSGTTGLPK). Residues 262–282 (ITLPFYHSAALLIGIHGCIVA) form a helical membrane-spanning segment. Residues 283–620 (GATLALRTKF…NAISAKTLKL (338 aa)) lie on the Cytoplasmic side of the membrane. Residue K291 is modified to N6-acetyllysine. T577 is subject to Phosphothreonine.

The protein belongs to the ATP-dependent AMP-binding enzyme family. As to expression, expressed in liver, kidney, placenta, intestine, brain, heart, and colon. Predominantly expressed in liver. Expressed in liver, placenta, and intestine, but much lower relative to isoform 1.

It is found in the endoplasmic reticulum membrane. The protein resides in the peroxisome membrane. It localises to the cell membrane. Its subcellular location is the microsome. The enzyme catalyses a fatty acid(in) = a fatty acid(out). The catalysed reaction is (9Z)-octadecenoate(out) = (9Z)-octadecenoate(in). It carries out the reaction a long-chain fatty acid + ATP + CoA = a long-chain fatty acyl-CoA + AMP + diphosphate. It catalyses the reaction (5Z,8Z,11Z,14Z)-eicosatetraenoate + ATP + CoA = (5Z,8Z,11Z,14Z)-eicosatetraenoyl-CoA + AMP + diphosphate. The enzyme catalyses hexadecanoate + ATP + CoA = hexadecanoyl-CoA + AMP + diphosphate. The catalysed reaction is (9Z)-octadecenoate + ATP + CoA = (9Z)-octadecenoyl-CoA + AMP + diphosphate. It carries out the reaction 3,7,11,15-tetramethylhexadecanoate + ATP + CoA = phytanoyl-CoA + AMP + diphosphate. It catalyses the reaction (9Z,12Z,15Z)-octadecatrienoate + ATP + CoA = (9Z,12Z,15Z)-octadecatrienoyl-CoA + AMP + diphosphate. The enzyme catalyses 2,6,10,14-tetramethylpentadecanoate + ATP + CoA = pristanoyl-CoA + AMP + diphosphate. The catalysed reaction is (E)-hexadec-2-enoate + ATP + CoA = (2E)-hexadecenoyl-CoA + AMP + diphosphate. It carries out the reaction a very long-chain fatty acid + ATP + CoA = a very long-chain fatty acyl-CoA + AMP + diphosphate. It catalyses the reaction tetracosanoate + ATP + CoA = tetracosanoyl-CoA + AMP + diphosphate. The enzyme catalyses (4Z,7Z,10Z,13Z,16Z,19Z)-docosahexaenoate + ATP + CoA = (4Z,7Z,10Z,13Z,16Z,19Z)-docosahexaenoyl-CoA + AMP + diphosphate. The catalysed reaction is (25R)-3alpha,7alpha,12alpha-trihydroxy-5beta-cholestan-26-oate + ATP + CoA = (25R)-3alpha,7alpha,12alpha-trihydroxy-5beta-cholestan-26-oyl-CoA + AMP + diphosphate. Its function is as follows. Mediates the import of long-chain fatty acids (LCFA) into the cell by facilitating their transport across cell membranes, playing an important role in hepatic fatty acid uptake. Also functions as an acyl-CoA ligase catalyzing the ATP-dependent formation of fatty acyl-CoA using LCFA and very-long-chain fatty acids (VLCFA) as substrates, which prevents fatty acid efflux from cells and might drive more fatty acid uptake. Plays a pivotal role in regulating available LCFA substrates from exogenous sources in tissues undergoing high levels of beta-oxidation or triglyceride synthesis. Can also activate branched-chain fatty acids such as phytanic acid and pristanic acid. May contribute to the synthesis of sphingosine-1-phosphate. Does not activate C24 bile acids, cholate and chenodeoxycholate. In vitro, activates 3-alpha,7-alpha,12-alpha-trihydroxy-5-beta-cholestanate (THCA), the C27 precursor of cholic acid deriving from the de novo synthesis from cholesterol. However, it is not critical for THCA activation and bile synthesis in vivo. In terms of biological role, exhibits both long-chain fatty acids (LCFA) transport activity and acyl CoA synthetase towards very long-chain fatty acids. Shows a preference for generating CoA derivatives of n-3 fatty acids, which are preferentially trafficked into phosphatidylinositol. Exhibits long-chain fatty acids (LCFA) transport activity but lacks acyl CoA synthetase towards very long-chain fatty acids. The chain is Long-chain fatty acid transport protein 2 (SLC27A2) from Homo sapiens (Human).